Reading from the N-terminus, the 1657-residue chain is MGDAAAAAPAAAAAGPSSTRGEPKDPRTIARKYQLDLCKRAVEENIIVYLGTGCGKTHIAVLLIYELGHLIRKPSREVCIFLAPTIPLVRQQAVVIASSTDFKVQCYYGNGKNSRDHQEWENDMREFEVLVMTPQILLQSLRHCFIKMNSIALLILDECHHAQPQKRHPYAQIMKEFYNSNSVEKFPRVFGMTASPIIGKGVMPSHSFTEKGGRSPCQPLIFFLPKGGSNKLNYTKCINSLEELLHAKVCSVDNEELESVVASPDMEVYFYGPVNHSNLTTICIKELDSLKLQSERMLRASLCDFKDSQKKLKSLWRLHENIIFCLQELGSFGALQAARTFLSFDGDKLDRREVDLNGSTSSFAHHYLNGATSILSRNKTDGSHAGSFDLEKLEEPFFSNKFSVLINVLSRYGLQENMKCIVFVKRITVARAISNILQNLKCLEFWKCEFLVGCHSGSKNMSRNKMDAIVQRFSSGEVNLLVATSVGEEGLDIQTCCLVVRFDLPETVASFIQSRGRARMTKSKYVVLLERENQSHEKLLNGYIAGESIMNEEIDSRTSNDMFDCLEENIYQVDNTGASISTACSVSLLHCYCDNLPRDMFFTPSPVFFYIDGIEGIICRLILPPNAAFRQADGQPCLSKDEAKRDACLKACVKLHKLGALTDFLLPGPGSRKNKVSVTNNSSNNKVEDDSLREELHEMLIPAVLKPSGLKLDSLSNLHFYYVKFIPIPEDRRYQMFGLFVINPLPVEAETLQVDLHLARGRIVKAGIKHLGKIAFEKEKMMLAHKFQEMCLKILLDRSEFTSPHVKLGNDVTLEINSTFYLLLPIKQKCYGDRFMIDWPAVERCLSSPIFKDPIDVSVHASYSSNESLRLLDGIFSKTDVVGSVVFSPHNNIFFFVDGILDEINAWSEHSGATYAEHFKERFRIELSHPEQPLLKAKQIFNLRNLLHNRLPETTESEGRELLEHFVELPPELCSLKVIGFSKDMGSSLSLLPSLMYRLENLLVAIELKDVMLSSFPEASQISASGILEALTTEKCLERISLERFEVLGDAFLKYVVGRHKFITYEGLDEGQLTRRRSDVVNNSHLYELSIRKKLQVYIRDQQFEPTQFFAPGRPCKVVCNTDVEVRLHQMDIHPDNRENCNLRCTRSHHWLHRKVIADVVESLIGAFLVEGGFKAAFAFLHWIGIDVDFNNPALYRVLDSSSINLSLMDYTDIAGLEELIGYKFKHKGLLLQAFVHPSFSQHSGGCYQRLEFLGDAVLEYVITSYLYSTYPDIKPGQITDLRSLAVGNDSLAYAAVEKSIHKHLIKDSNHLTSAISKFEMYVKLSNSEKDLLEEPACPKALGDIVESCIGAVLLDSGFNLNYVWKVMLMLLKPVLTFANMHTNPMRELRELCQCHGFELGLPKPMKADGEYHVKVEVNIKSKIIICTAANRNSKAARKFAAQETLSKLKNYGYKHRNKSLEEILIVARKRESELIGYNEDPIDVEADISVKMKSPHIHEENIPFQNTETSFTRSSKFHNQIIAGSGKHDVNNGRNNQPKLATQSGRLPSEATEKSNKKVYHGDMVHKTARSFLFELCAANYWKPPEFKLCKEEGPSHLRKFTYKVVVEIKGASATLLECHSDGKLQKKAAQEHAAQGALWCLKQLGHLPKEEDVRV.

Over residues 1 to 14 (MGDAAAAAPAAAAA) the composition is skewed to low complexity. The disordered stretch occupies residues 1-26 (MGDAAAAAPAAAAAGPSSTRGEPKDP). The Helicase ATP-binding domain maps to 37 to 214 (LCKRAVEENI…SHSFTEKGGR (178 aa)). 50–57 (LGTGCGKT) provides a ligand contact to ATP. The DECH box signature appears at 157-160 (DECH). One can recognise a Helicase C-terminal domain in the interval 400-567 (NKFSVLINVL…TSNDMFDCLE (168 aa)). In terms of domain architecture, Dicer dsRNA-binding fold spans 585 to 675 (SVSLLHCYCD…LPGPGSRKNK (91 aa)). In terms of domain architecture, PAZ spans 856–978 (DVSVHASYSS…LPPELCSLKV (123 aa)). RNase III domains follow at residues 1010 to 1173 (DVML…VEGG) and 1214 to 1358 (IAGL…LDSG). Residues Glu-1252, Asp-1344, and Glu-1347 each coordinate Mg(2+). The 68-residue stretch at 1384–1451 (NPMRELRELC…AQETLSKLKN (68 aa)) folds into the DRBM 1 domain. The disordered stretch occupies residues 1525-1556 (GSGKHDVNNGRNNQPKLATQSGRLPSEATEKS). Residues 1533 to 1547 (NGRNNQPKLATQSGR) show a composition bias toward polar residues. In terms of domain architecture, DRBM 2 spans 1569–1645 (TARSFLFELC…AQGALWCLKQ (77 aa)).

This sequence belongs to the helicase family. Dicer subfamily. May interact with ARGONAUTE1 or PINHEAD through their common PAZ domains. Mg(2+) serves as cofactor. It depends on Mn(2+) as a cofactor. As to expression, expressed in roots, leaf blades, leaf sheaths, shoot apices and spikelets.

It is found in the nucleus. In terms of biological role, involved in the RNA silencing pathway. Cleaves double-stranded RNA to produce small interfering RNAs (siRNAs) which target the selective destruction of complementary RNAs. Required for the production of 21 nucleotide siRNAs. Regulates shoot apical meristem (SAM) initiation and maintenance, leaf polarization and lemma polarity through the trans-acting siRNAS (ta-siRNAs) pathway, which probably modulate the expression of the ARF2, ARF3, ARF4, ARF14 and ARF15 genes. Can process endogenous 21 nucleotide siRNAs derived from an imperfect inverted repeat. May not be involved in microRNAs (miRNAs) production. This is Endoribonuclease Dicer homolog 4 (DCL4) from Oryza sativa subsp. japonica (Rice).